The sequence spans 349 residues: Phenylalanine--tRNA ligase alpha subunit (349 aa).

Glu258 lines the Mg(2+) pocket.

This sequence belongs to the class-II aminoacyl-tRNA synthetase family. Phe-tRNA synthetase alpha subunit type 1 subfamily. As to quaternary structure, tetramer of two alpha and two beta subunits. The cofactor is Mg(2+).

It localises to the cytoplasm. The enzyme catalyses tRNA(Phe) + L-phenylalanine + ATP = L-phenylalanyl-tRNA(Phe) + AMP + diphosphate + H(+). In Rickettsia bellii (strain RML369-C), this protein is Phenylalanine--tRNA ligase alpha subunit.